A 123-amino-acid chain; its full sequence is Small ribosomal subunit protein uS13 (123 aa).

The segment at 97–123 is disordered; sequence PVRGQRTHTNAKTRKGRSKLPVAAKKK.

The protein belongs to the universal ribosomal protein uS13 family. In terms of assembly, part of the 30S ribosomal subunit. Forms a loose heterodimer with protein S19. Forms two bridges to the 50S subunit in the 70S ribosome.

In terms of biological role, located at the top of the head of the 30S subunit, it contacts several helices of the 16S rRNA. In the 70S ribosome it contacts the 23S rRNA (bridge B1a) and protein L5 of the 50S subunit (bridge B1b), connecting the 2 subunits; these bridges are implicated in subunit movement. Contacts the tRNAs in the A and P-sites. This is Small ribosomal subunit protein uS13 from Ehrlichia canis (strain Jake).